Consider the following 455-residue polypeptide: Kynurenine 3-monooxygenase (455 aa).

The protein belongs to the aromatic-ring hydroxylase family. KMO subfamily. Requires FAD as cofactor.

It catalyses the reaction L-kynurenine + NADPH + O2 + H(+) = 3-hydroxy-L-kynurenine + NADP(+) + H2O. It participates in cofactor biosynthesis; NAD(+) biosynthesis; quinolinate from L-kynurenine: step 1/3. In terms of biological role, catalyzes the hydroxylation of L-kynurenine (L-Kyn) to form 3-hydroxy-L-kynurenine (L-3OHKyn). Required for synthesis of quinolinic acid. This chain is Kynurenine 3-monooxygenase, found in Xanthomonas axonopodis pv. citri (strain 306).